The following is a 96-amino-acid chain: ASNSD1 upstream open reading frame protein (96 aa).

Residues 1–10 (MPSRGTRPED) show a composition bias toward basic and acidic residues. The interval 1 to 28 (MPSRGTRPEDSSVLIPTDNSTPHKEDLS) is disordered. Residues 23–96 (HKEDLSSKIK…ENLDKTKIKK (74 aa)) adopt a coiled-coil conformation.

As to quaternary structure, component of the PAQosome complex which is responsible for the biogenesis of several protein complexes and which consists of R2TP complex members RUVBL1, RUVBL2, RPAP3 and PIH1D1, URI complex members PFDN2, PFDN6, PDRG1, UXT and URI1 as well as ASDURF, POLR2E and DNAAF10/WDR92.

Its subcellular location is the cytoplasm. This is ASNSD1 upstream open reading frame protein from Homo sapiens (Human).